Here is a 543-residue protein sequence, read N- to C-terminus: Sensor histidine kinase DcuS (543 aa).

The Cytoplasmic segment spans residues 1–20 (MRHSLPYRMLRKRPMKLSTT). Residues 21–41 (VILMVSAVLFSVLLVVHLIYF) form a helical membrane-spanning segment. The Periplasmic portion of the chain corresponds to 42-181 (SQISDMTRDG…VTQQINDSRW (140 aa)). Residues 107–110 (RYSH), lysine 121, 140–142 (GFL), and arginine 147 contribute to the (R)-malate site. A helical membrane pass occupies residues 182 to 202 (SIIWSVLFGMLVGLIGTCILV). The Cytoplasmic portion of the chain corresponds to 203–543 (NVLKKILFGL…IPWDGERSNR (341 aa)). The 112-residue stretch at 212 to 323 (LEPYEISTLF…IIGAISTFRD (112 aa)) folds into the PAS domain. Residues 346 to 538 (ERSHEFMNKL…QFFVQIPWDG (193 aa)) form the Histidine kinase domain. A Phosphohistidine; by autocatalysis modification is found at histidine 349.

In terms of assembly, homodimer. Autophosphorylated. The phosphoryl group is rapidly transferred to DcuR.

The protein localises to the cell inner membrane. The enzyme catalyses ATP + protein L-histidine = ADP + protein N-phospho-L-histidine.. Member of the two-component regulatory system DcuR/DcuS. Involved in the C4-dicarboxylate-stimulated regulation of the genes encoding the anaerobic fumarate respiratory system (frdABCD; nuoAN; dcuB; sdhCDAB; etc.). Weakly regulates the aerobic C4-dicarboxylate transporter dctA. Activates DcuR by phosphorylation. In Escherichia coli O6:H1 (strain CFT073 / ATCC 700928 / UPEC), this protein is Sensor histidine kinase DcuS (dcuS).